We begin with the raw amino-acid sequence, 339 residues long: Ketol-acid reductoisomerase (NADP(+)) (339 aa).

A KARI N-terminal Rossmann domain is found at 1–182 (MRVYYDRDAD…GGGRAGVIET (182 aa)). Residues 24–27 (YGSQ), Arg-48, Ser-51, Thr-53, and 83–86 (DELQ) contribute to the NADP(+) site. The active site involves His-108. An NADP(+)-binding site is contributed by Gly-134. One can recognise a KARI C-terminal knotted domain in the interval 183–328 (TFKEECETDL…KKLRSMMPWI (146 aa)). Mg(2+)-binding residues include Asp-191, Glu-195, Glu-227, and Glu-231. Residue Ser-252 coordinates substrate.

It belongs to the ketol-acid reductoisomerase family. Mg(2+) is required as a cofactor.

The catalysed reaction is (2R)-2,3-dihydroxy-3-methylbutanoate + NADP(+) = (2S)-2-acetolactate + NADPH + H(+). The enzyme catalyses (2R,3R)-2,3-dihydroxy-3-methylpentanoate + NADP(+) = (S)-2-ethyl-2-hydroxy-3-oxobutanoate + NADPH + H(+). The protein operates within amino-acid biosynthesis; L-isoleucine biosynthesis; L-isoleucine from 2-oxobutanoate: step 2/4. It participates in amino-acid biosynthesis; L-valine biosynthesis; L-valine from pyruvate: step 2/4. In terms of biological role, involved in the biosynthesis of branched-chain amino acids (BCAA). Catalyzes an alkyl-migration followed by a ketol-acid reduction of (S)-2-acetolactate (S2AL) to yield (R)-2,3-dihydroxy-isovalerate. In the isomerase reaction, S2AL is rearranged via a Mg-dependent methyl migration to produce 3-hydroxy-3-methyl-2-ketobutyrate (HMKB). In the reductase reaction, this 2-ketoacid undergoes a metal-dependent reduction by NADPH to yield (R)-2,3-dihydroxy-isovalerate. The protein is Ketol-acid reductoisomerase (NADP(+)) of Bartonella tribocorum (strain CIP 105476 / IBS 506).